A 362-amino-acid polypeptide reads, in one-letter code: Very-long-chain (3R)-3-hydroxyacyl-CoA dehydratase 3 (362 aa).

Residue Met1 is modified to N-acetylmethionine. The Cytoplasmic segment spans residues 1–149 (MENQVLTPHV…ETLTNLRKGY (149 aa)). A CS domain is found at 5-94 (VLTPHVYWAQ…KVSQWWERLT (90 aa)). At Thr7 the chain carries Phosphothreonine. Residues 111-136 (LDESDAEMELRAKEEERLNKLRLESE) adopt a coiled-coil conformation. Phosphoserine occurs at positions 114 and 135. A helical transmembrane segment spans residues 150 to 170 (LFMYNLVQFLGFSWIFVNLTV). Residues 171 to 185 (RFCILGKESFYDTFH) lie on the Lumenal side of the membrane. The chain crosses the membrane as a helical span at residues 186–207 (TVADMMYFCQMLAVVETINAAI). Topologically, residues 208 to 217 (GVTTSPVLPS) are cytoplasmic. A helical membrane pass occupies residues 218–235 (LIQLLGRNFILFIIFGTM). Over 236 to 241 (EEMQNK) the chain is Lumenal. The chain crosses the membrane as a helical span at residues 242–256 (AVVFFVFYLWSAIEI). At 257–279 (FRYSFYMLTCIDMDWKVLTWLRY) the chain is on the cytoplasmic side. The helical transmembrane segment at 280–298 (TLWIPLYPLGCLAEAVSVI) threads the bilayer. Residues Tyr286 and Glu293 contribute to the active site. Over 299–322 (QSIPIFNETGRFSFTLPYPVKIKV) the chain is Lumenal. Residues 323–343 (RFSFFLQIYLIMIFLGLYINF) form a helical membrane-spanning segment. Topologically, residues 344–362 (RHLYKQRRRRYGQKKKKIH) are cytoplasmic.

It belongs to the very long-chain fatty acids dehydratase HACD family. As to quaternary structure, may interact with enzymes of the ELO family (including ELOVL1); with those enzymes that mediate condensation, the first of the four steps of the reaction cycle responsible for fatty acids elongation, may be part of a larger fatty acids elongase complex. Interacts with RAC1. Associates with internalized insulin receptor/INSR complexes on Golgi/endosomal membranes; HACD3/PTPLAD1 together with ATIC and PRKAA2/AMPK2 is proposed to be part of a signaling network regulating INSR autophosphorylation and endocytosis. In terms of tissue distribution, highly expressed in testis, kidney, brain, liver and weakly in skeletal muscle, spleen and heart. No expression detected in leukocytes.

Its subcellular location is the endoplasmic reticulum membrane. It catalyses the reaction a very-long-chain (3R)-3-hydroxyacyl-CoA = a very-long-chain (2E)-enoyl-CoA + H2O. It carries out the reaction (3R)-hydroxyhexadecanoyl-CoA = (2E)-hexadecenoyl-CoA + H2O. Its pathway is lipid metabolism; fatty acid biosynthesis. Catalyzes the third of the four reactions of the long-chain fatty acids elongation cycle. This endoplasmic reticulum-bound enzymatic process, allows the addition of two carbons to the chain of long- and very long-chain fatty acids/VLCFAs per cycle. This enzyme catalyzes the dehydration of the 3-hydroxyacyl-CoA intermediate into trans-2,3-enoyl-CoA, within each cycle of fatty acid elongation. Thereby, it participates in the production of VLCFAs of different chain lengths that are involved in multiple biological processes as precursors of membrane lipids and lipid mediators. May be involved in Rac1-signaling pathways leading to the modulation of gene expression. Promotes insulin receptor/INSR autophosphorylation and is involved in INSR internalization. The chain is Very-long-chain (3R)-3-hydroxyacyl-CoA dehydratase 3 from Homo sapiens (Human).